A 353-amino-acid polypeptide reads, in one-letter code: Heterogeneous nuclear ribonucleoprotein D0 (353 aa).

Residues 1–89 form a disordered region; that stretch reads MSEEQFGGDG…SSPRHTEAAT (89 aa). Position 2 is an N-acetylserine (serine 2). Residues 11 to 42 are compositionally biased toward low complexity; it reads AAAAATAAVGGSAGEQEGAMVAAAQGAAAAAG. The span at 43–56 shows a compositional bias: gly residues; sequence SGSGGGSAPGGTEG. Over residues 62–71 the composition is skewed to basic and acidic residues; sequence EGAKIDASKN. Phosphoserine is present on serine 69. A Glycyl lysine isopeptide (Lys-Gly) (interchain with G-Cter in SUMO2) cross-link involves residue lysine 70. A phosphoserine mark is found at serine 78, serine 80, and serine 81. The residue at position 89 (threonine 89) is a Phosphothreonine. RRM domains follow at residues 95–177 and 180–259; these read WKMF…KTKE and KKIF…MSKE. At lysine 117 the chain carries N6-methyllysine. Threonine 125 carries the phosphothreonine modification. Residue lysine 127 forms a Glycyl lysine isopeptide (Lys-Gly) (interchain with G-Cter in SUMO2) linkage. Lysine 163 carries the N6-acetyllysine modification. Serine 188 is modified (phosphoserine). Residue threonine 191 is modified to Phosphothreonine. Lysine 195 participates in a covalent cross-link: Glycyl lysine isopeptide (Lys-Gly) (interchain with G-Cter in SUMO2). 2 positions are modified to N6-acetyllysine: lysine 241 and lysine 249. Residue serine 269 is modified to Phosphoserine. Omega-N-methylarginine is present on residues arginine 270, arginine 276, arginine 278, and arginine 280. Arginine 343 is subject to Asymmetric dimethylarginine; alternate. Arginine 343 carries the dimethylated arginine; alternate modification. Arginine 343 carries the post-translational modification Omega-N-methylarginine; alternate.

In terms of assembly, identified in a IGF2BP1-dependent mRNP granule complex containing untranslated mRNAs. Part of a complex associated with the FOS mCRD domain and consisting of PABPC1, PAIP1, CSDE1/UNR and SYNCRIP. Interacts with IGF2BP2. Interacts with GTPBP1. Interacts with EIF4G1; the interaction requires RNA. Interacts with EIF3B and RPS3. Methylated by PRMT1, in an insulin-dependent manner. The PRMT1-mediated methylation regulates its phosphorylation. Post-translationally, arg-343 is dimethylated, probably to asymmetric dimethylarginine.

The protein resides in the nucleus. It localises to the cytoplasm. Binds with high affinity to RNA molecules that contain AU-rich elements (AREs) found within the 3'-UTR of many proto-oncogenes and cytokine mRNAs. Also binds to double- and single-stranded DNA sequences in a specific manner and functions a transcription factor. Each of the RNA-binding domains specifically can bind solely to a single-stranded non-monotonous 5'-UUAG-3' sequence and also weaker to the single-stranded 5'-TTAGGG-3' telomeric DNA repeat. Binds RNA oligonucleotides with 5'-UUAGGG-3' repeats more tightly than the telomeric single-stranded DNA 5'-TTAGGG-3' repeats. Binding of RRM1 to DNA inhibits the formation of DNA quadruplex structure which may play a role in telomere elongation. May be involved in translationally coupled mRNA turnover. Implicated with other RNA-binding proteins in the cytoplasmic deadenylation/translational and decay interplay of the FOS mRNA mediated by the major coding-region determinant of instability (mCRD) domain. May play a role in the regulation of the rhythmic expression of circadian clock core genes. Directly binds to the 3'UTR of CRY1 mRNA and induces CRY1 rhythmic translation. May also be involved in the regulation of PER2 translation. The sequence is that of Heterogeneous nuclear ribonucleoprotein D0 (Hnrnpd) from Rattus norvegicus (Rat).